A 136-amino-acid chain; its full sequence is Large-conductance mechanosensitive channel (136 aa).

The Cytoplasmic portion of the chain corresponds to 1–16 (MGLLSEFKAFAVKGNV). The helical transmembrane segment at 17–45 (VDMAVGIIIGAAFGKIVSSFVGDVIMPPI) threads the bilayer. Residues 46–73 (GLLIGGVDFSDLAITLKAEGDVPAVVLA) lie on the Extracellular side of the membrane. A helical transmembrane segment spans residues 74 to 93 (YRKFIQTVLNFVIVAFAIFM). Residues 94-136 (GVKAINRLKREEAVAPSEPPVPSAEETLLTEIRDLLKAQQNKS) are Cytoplasmic-facing.

This sequence belongs to the MscL family. As to quaternary structure, homopentamer.

It is found in the cell inner membrane. Its function is as follows. Channel that opens in response to stretch forces in the membrane lipid bilayer. Forms a nonselective ion channel with a conductance of about 4 nanosiemens. May participate in the regulation of osmotic pressure changes within the cell. This Pseudomonas fluorescens protein is Large-conductance mechanosensitive channel.